The chain runs to 283 residues: Bifunctional protein FolD (283 aa).

NADP(+) is bound by residues 164-166 (GRS), Ser-189, and Ile-230.

This sequence belongs to the tetrahydrofolate dehydrogenase/cyclohydrolase family. As to quaternary structure, homodimer.

The catalysed reaction is (6R)-5,10-methylene-5,6,7,8-tetrahydrofolate + NADP(+) = (6R)-5,10-methenyltetrahydrofolate + NADPH. It carries out the reaction (6R)-5,10-methenyltetrahydrofolate + H2O = (6R)-10-formyltetrahydrofolate + H(+). The protein operates within one-carbon metabolism; tetrahydrofolate interconversion. Its function is as follows. Catalyzes the oxidation of 5,10-methylenetetrahydrofolate to 5,10-methenyltetrahydrofolate and then the hydrolysis of 5,10-methenyltetrahydrofolate to 10-formyltetrahydrofolate. The polypeptide is Bifunctional protein FolD (Lactobacillus delbrueckii subsp. bulgaricus (strain ATCC 11842 / DSM 20081 / BCRC 10696 / JCM 1002 / NBRC 13953 / NCIMB 11778 / NCTC 12712 / WDCM 00102 / Lb 14)).